We begin with the raw amino-acid sequence, 275 residues long: Myb/SANT-like DNA-binding domain-containing protein 3 (275 aa).

Positions 13–78 constitute a Myb-like domain; it reads FSELEKSILL…QLKKCWENIK (66 aa). A phosphoserine mark is found at serine 96 and serine 98. Lysine 154 is covalently cross-linked (Glycyl lysine isopeptide (Lys-Gly) (interchain with G-Cter in SUMO2)). Residues 211–247 adopt a coiled-coil conformation; it reads QLIQMNEVHVAKIQQIERECEMAEEEHRIKMEVLNKK. A Phosphoserine modification is found at serine 274.

Belongs to the MSANTD3 family.

The polypeptide is Myb/SANT-like DNA-binding domain-containing protein 3 (MSANTD3) (Bos taurus (Bovine)).